Reading from the N-terminus, the 1088-residue chain is RNA-directed RNA polymerase (1088 aa).

Residues 501–687 (LSYGDVTRFL…AKRYIAGGKI (187 aa)) enclose the RdRp catalytic domain.

It belongs to the reoviridae RNA-directed RNA polymerase family. Interacts with VP3 (Potential). Interacts with VP2; this interaction activates VP1. Interacts with NSP5; this interaction is probably necessary for the formation of functional virus factories. Interacts with NSP2; this interaction is weak. Requires Mg(2+) as cofactor.

Its subcellular location is the virion. The enzyme catalyses RNA(n) + a ribonucleoside 5'-triphosphate = RNA(n+1) + diphosphate. Functionally, RNA-directed RNA polymerase that is involved in both transcription and genome replication. Together with VP3 capping enzyme, forms an enzyme complex positioned near the channels situated at each of the five-fold vertices of the core. Following infection, the outermost layer of the virus is lost, leaving a double-layered particle (DLP) made up of the core and VP6 shell. VP1 then catalyzes the transcription of fully conservative plus-strand genomic RNAs that are extruded through the DLP's channels into the cytoplasm where they function as mRNAs for translation of viral proteins. One copy of each of the viral (+)RNAs is also recruited during core assembly, together with newly synthesized polymerase complexes and VP2. The polymerase of these novo-formed particles catalyzes the synthesis of complementary minus-strands leading to dsRNA formation. To do so, the polymerase specifically recognizes and binds 4 bases 5'-UGUG-3' in the conserved 3'-sequence of plus-strand RNA templates. VP2 presumably activates the autoinhibited VP1-RNA complex to coordinate packaging and genome replication. Once dsRNA synthesis is complete, the polymerase switches to the transcriptional mode, thus providing secondary transcription. The protein is RNA-directed RNA polymerase of Homo sapiens (Human).